Consider the following 264-residue polypeptide: ATP synthase subunit a (264 aa).

A run of 5 helical transmembrane segments spans residues 39–59 (LDTL…FYIV), 97–117 (VAPL…MDLV), 139–159 (TADP…VIFY), 205–225 (LFGN…LPWW), and 239–259 (LLVI…YISL).

This sequence belongs to the ATPase A chain family. As to quaternary structure, F-type ATPases have 2 components, CF(1) - the catalytic core - and CF(0) - the membrane proton channel. CF(1) has five subunits: alpha(3), beta(3), gamma(1), delta(1), epsilon(1). CF(0) has three main subunits: a(1), b(2) and c(9-12). The alpha and beta chains form an alternating ring which encloses part of the gamma chain. CF(1) is attached to CF(0) by a central stalk formed by the gamma and epsilon chains, while a peripheral stalk is formed by the delta and b chains.

The protein resides in the cell inner membrane. In terms of biological role, key component of the proton channel; it plays a direct role in the translocation of protons across the membrane. In Coxiella burnetii (strain CbuK_Q154) (Coxiella burnetii (strain Q154)), this protein is ATP synthase subunit a.